The chain runs to 835 residues: Protein translocase subunit SecA (835 aa).

ATP is bound by residues Q85, G103 to T107, and D492. The disordered stretch occupies residues V788–V807. 4 residues coordinate Zn(2+): C819, C821, C830, and C831.

Belongs to the SecA family. As to quaternary structure, monomer and homodimer. Part of the essential Sec protein translocation apparatus which comprises SecA, SecYEG and auxiliary proteins SecDF. Other proteins may also be involved. It depends on Zn(2+) as a cofactor.

The protein localises to the cell membrane. It is found in the cytoplasm. The catalysed reaction is ATP + H2O + cellular proteinSide 1 = ADP + phosphate + cellular proteinSide 2.. Its function is as follows. Part of the Sec protein translocase complex. Interacts with the SecYEG preprotein conducting channel. Has a central role in coupling the hydrolysis of ATP to the transfer of proteins into and across the cell membrane, serving as an ATP-driven molecular motor driving the stepwise translocation of polypeptide chains across the membrane. In Bacillus cereus (strain ATCC 14579 / DSM 31 / CCUG 7414 / JCM 2152 / NBRC 15305 / NCIMB 9373 / NCTC 2599 / NRRL B-3711), this protein is Protein translocase subunit SecA.